Here is a 274-residue protein sequence, read N- to C-terminus: Oxidized low-density lipoprotein receptor 1 (274 aa).

The disordered stretch occupies residues 1–28 (MTLDDLKSNSMKDQPDEKSNGDKAEGPR). At 1-37 (MTLDDLKSNSMKDQPDEKSNGDKAEGPRSLSTLRWRP) the chain is on the cytoplasmic side. A compositionally biased stretch (basic and acidic residues) spans 13 to 26 (DQPDEKSNGDKAEG). A helical; Signal-anchor for type II membrane protein membrane pass occupies residues 38–60 (AALILGLLCLGLLVTVILLIIQL). Residue Cys-46 is the site of S-palmitoyl cysteine attachment. Residues 61 to 150 (SQVSDLLKQQ…SGPCPQDWLW (90 aa)) form a neck region. Residues 61-274 (SQVSDLLKQQ…QKRANLLRAQ (214 aa)) are Extracellular-facing. Positions 89–142 (RQAEKSSQESQRELTEMIETLAHKLDEKSKKLMELQQQNLNLQKALEKAANFSG) form a coiled coil. N-linked (GlcNAc...) asparagine glycosylation occurs at Asn-139. Disulfide bonds link Cys-144/Cys-155, Cys-172/Cys-264, and Cys-243/Cys-256. The C-type lectin domain maps to 151-265 (HEENCYKFSS…CILNAFSICQ (115 aa)).

As to quaternary structure, homodimer; disulfide-linked. May form a hexamer composed of 3 homodimers. Interacts with HSP70. In terms of processing, N-glycosylated.

It localises to the cell membrane. Its subcellular location is the membrane raft. It is found in the secreted. Functionally, receptor that mediates the recognition, internalization and degradation of oxidatively modified low density lipoprotein (oxLDL) by vascular endothelial cells. OxLDL is a marker of atherosclerosis that induces vascular endothelial cell activation and dysfunction, resulting in pro-inflammatory responses, pro-oxidative conditions and apoptosis. Its association with oxLDL induces the activation of NF-kappa-B through an increased production of intracellular reactive oxygen and a variety of pro-atherogenic cellular responses including a reduction of nitric oxide (NO) release, monocyte adhesion and apoptosis. In addition to binding oxLDL, it acts as a receptor for the HSP70 protein involved in antigen cross-presentation to naive T-cells in dendritic cells, thereby participating in cell-mediated antigen cross-presentation. Also involved in inflammatory process, by acting as a leukocyte-adhesion molecule at the vascular interface in endotoxin-induced inflammation. Also acts as a receptor for advanced glycation end (AGE) products, activated platelets, monocytes, apoptotic cells and both Gram-negative and Gram-positive bacteria. This chain is Oxidized low-density lipoprotein receptor 1 (OLR1), found in Sus scrofa (Pig).